Reading from the N-terminus, the 333-residue chain is FAD-dependent monooxygenase pytG (333 aa).

A helical membrane pass occupies residues 6-26 (LPNVSVAIIGAGIGGLTLGAF). FAD is bound by residues E38 and R109. N303 carries an N-linked (GlcNAc...) asparagine glycan.

Belongs to the paxM FAD-dependent monooxygenase family. FAD serves as cofactor.

The protein localises to the membrane. It functions in the pathway secondary metabolite biosynthesis. FAD-dependent monooxygenase; part of the gene cluster that mediates the biosynthesis of pyranterreones, a family of antioxidative compounds. The first step of pyranonigrins biosynthesis is performed by the hybrid PKS-NRPS synthetase pytA that condenses 4 malonyl-CoA units ato the acetyl starter unit by the modular PKS of pytA. The acyl chain is then connected to an L-serine through the amide bond by the modular NRPS of pytA. A tetramic acid is formed and released from the PKS-NRPS pytA to give pyranterreone 5 with the help of the thioesterase pytI. Pyranterreone 5 could be methylated by pytC to afford pyranterreone 6. Both pyranterreones 5 and 6 are subsequently oxidized by the FAD-linked oxidoreductase pytB and the cytochrome P450 monooxygenase pytD to form the fused gamma-pyrone core, resulting in pyranterreones 7 and 11, respectively. The hydroxy group at C-8 of pyranterreones 7 and 11 are dehydrated by the aspartyl protease pytH to form a delta-7 double bond to give pyranterreones 3 and 1, 2 accordingly. The exo-methylene of pyranterreone 3 could be reduced into a pendant methyl by reductase pytE to provide pyranterreone 4, also known as cordylactam. Pyranterreone 4 can be reconverted to pyranterreone 3 through pytB-catalyzed dehydrogenation or further oxidized to pyranterreones 9 and 10. In Aspergillus terreus (strain NIH 2624 / FGSC A1156), this protein is FAD-dependent monooxygenase pytG.